The following is a 99-amino-acid chain: Aspartyl/glutamyl-tRNA(Asn/Gln) amidotransferase subunit C (99 aa).

Belongs to the GatC family. Heterotrimer of A, B and C subunits.

The enzyme catalyses L-glutamyl-tRNA(Gln) + L-glutamine + ATP + H2O = L-glutaminyl-tRNA(Gln) + L-glutamate + ADP + phosphate + H(+). The catalysed reaction is L-aspartyl-tRNA(Asn) + L-glutamine + ATP + H2O = L-asparaginyl-tRNA(Asn) + L-glutamate + ADP + phosphate + 2 H(+). Allows the formation of correctly charged Asn-tRNA(Asn) or Gln-tRNA(Gln) through the transamidation of misacylated Asp-tRNA(Asn) or Glu-tRNA(Gln) in organisms which lack either or both of asparaginyl-tRNA or glutaminyl-tRNA synthetases. The reaction takes place in the presence of glutamine and ATP through an activated phospho-Asp-tRNA(Asn) or phospho-Glu-tRNA(Gln). In Burkholderia thailandensis (strain ATCC 700388 / DSM 13276 / CCUG 48851 / CIP 106301 / E264), this protein is Aspartyl/glutamyl-tRNA(Asn/Gln) amidotransferase subunit C.